The following is a 113-amino-acid chain: Large ribosomal subunit protein uL22 (113 aa).

This sequence belongs to the universal ribosomal protein uL22 family. As to quaternary structure, part of the 50S ribosomal subunit.

In terms of biological role, this protein binds specifically to 23S rRNA; its binding is stimulated by other ribosomal proteins, e.g. L4, L17, and L20. It is important during the early stages of 50S assembly. It makes multiple contacts with different domains of the 23S rRNA in the assembled 50S subunit and ribosome. Its function is as follows. The globular domain of the protein is located near the polypeptide exit tunnel on the outside of the subunit, while an extended beta-hairpin is found that lines the wall of the exit tunnel in the center of the 70S ribosome. This is Large ribosomal subunit protein uL22 from Bacillus thuringiensis subsp. konkukian (strain 97-27).